A 259-amino-acid chain; its full sequence is L-ornithine N(alpha)-acyltransferase (259 aa).

Belongs to the acetyltransferase family. OlsB subfamily.

The enzyme catalyses a (3R)-hydroxyacyl-[ACP] + L-ornithine = a lyso-ornithine lipid + holo-[ACP] + H(+). It participates in lipid metabolism. Functionally, catalyzes the first step in the biosynthesis of ornithine lipids, which are phosphorus-free membrane lipids. Catalyzes the 3-hydroxyacyl-acyl carrier protein-dependent acylation of ornithine to form lyso-ornithine lipid (LOL). The protein is L-ornithine N(alpha)-acyltransferase of Rhodobacter capsulatus (strain ATCC BAA-309 / NBRC 16581 / SB1003).